The chain runs to 262 residues: Apolipoprotein A-I (262 aa).

A signal peptide spans 1 to 18 (MKFLALALTILLAAATQA). Residues 32-63 (VKVAMMEYMAQVKETGQRSIDLLDDTEFKEYK) are 3 X approximate tandem repeats. 2 repeat units span residues 64–85 (VQLS…QSLA) and 87–107 (YSEA…AEVM). Residues 64 to 262 (VQLSQSLDNL…YETISQAMKA (199 aa)) form a 10 X approximate tandem repeats region. A 3; half-length repeat occupies 108–118 (KDVEDVRTQLE). Repeat copies occupy residues 119–140 (PKRA…KKLE), 141–162 (PLIK…VKME), 163–184 (PVVE…AKLM), 185–206 (PIVE…TLAA), and 207–228 (PYAE…EKVG). The 9; half-length repeat unit spans residues 229–239 (PLTNDFKGQVG). The stretch at 240–262 (PAAEQAKEKLMDFYETISQAMKA) is repeat 10.

The protein belongs to the apolipoprotein A1/A4/E family.

It is found in the secreted. In terms of biological role, participates in the reverse transport of cholesterol from tissues to the liver for excretion by promoting cholesterol efflux from tissues and by acting as a cofactor for the lecithin cholesterol acyltransferase (LCAT). This Salmo trutta (Brown trout) protein is Apolipoprotein A-I (apoa1).